We begin with the raw amino-acid sequence, 311 residues long: Pantothenate synthetase (311 aa).

Residue 43-50 participates in ATP binding; that stretch reads MGALHEGH. His50 serves as the catalytic Proton donor. (R)-pantoate is bound at residue Gln75. Position 75 (Gln75) interacts with beta-alanine. ATP is bound at residue 161-164; it reads GEKD. Gln167 is a binding site for (R)-pantoate. Residues Val190 and 198–201 each bind ATP; that span reads MSSR.

This sequence belongs to the pantothenate synthetase family. As to quaternary structure, homodimer.

The protein resides in the cytoplasm. It catalyses the reaction (R)-pantoate + beta-alanine + ATP = (R)-pantothenate + AMP + diphosphate + H(+). The protein operates within cofactor biosynthesis; (R)-pantothenate biosynthesis; (R)-pantothenate from (R)-pantoate and beta-alanine: step 1/1. Its function is as follows. Catalyzes the condensation of pantoate with beta-alanine in an ATP-dependent reaction via a pantoyl-adenylate intermediate. In Mycolicibacterium vanbaalenii (strain DSM 7251 / JCM 13017 / BCRC 16820 / KCTC 9966 / NRRL B-24157 / PYR-1) (Mycobacterium vanbaalenii), this protein is Pantothenate synthetase.